Reading from the N-terminus, the 212-residue chain is Large ribosomal subunit protein mL48 (212 aa).

Residues 1–28 (MSGTLEKVLCLRNNTIFKQAFSLLRFRT) constitute a mitochondrion transit peptide. Position 199 is an N6-succinyllysine (Lys199).

Belongs to the mitochondrion-specific ribosomal protein mL48 family. As to quaternary structure, component of the mitochondrial large ribosomal subunit (mt-LSU). Mature mammalian 55S mitochondrial ribosomes consist of a small (28S) and a large (39S) subunit. The 28S small subunit contains a 12S ribosomal RNA (12S mt-rRNA) and 30 different proteins. The 39S large subunit contains a 16S rRNA (16S mt-rRNA), a copy of mitochondrial valine transfer RNA (mt-tRNA(Val)), which plays an integral structural role, and 52 different proteins. mL48 is located at the central protuberance. Interacts with OXA1L.

It is found in the mitochondrion. The chain is Large ribosomal subunit protein mL48 (MRPL48) from Homo sapiens (Human).